The sequence spans 372 residues: Glycerophosphodiester phosphodiesterase GDPD6 (372 aa).

An N-terminal signal peptide occupies residues 1-21; sequence MAFKYLLPLLLLSLLVANCAS. The segment at 32 to 58 is disordered; that stretch reads KHATKKPLQTSRPYNLAHRGSNGELPE. The GP-PDE domain maps to 44 to 362; it reads PYNLAHRGSN…DFTGSLHNYQ (319 aa). Asparagine 120, asparagine 239, and asparagine 260 each carry an N-linked (GlcNAc...) asparagine glycan.

This sequence belongs to the glycerophosphoryl diester phosphodiesterase family. Expressed in flowers and siliques.

The enzyme catalyses a sn-glycero-3-phosphodiester + H2O = an alcohol + sn-glycerol 3-phosphate + H(+). The polypeptide is Glycerophosphodiester phosphodiesterase GDPD6 (Arabidopsis thaliana (Mouse-ear cress)).